A 250-amino-acid chain; its full sequence is Methionine aminopeptidase (250 aa).

A substrate-binding site is contributed by H77. Residues D95, D106, and H169 each coordinate a divalent metal cation. H176 serves as a coordination point for substrate. Positions 202 and 233 each coordinate a divalent metal cation.

This sequence belongs to the peptidase M24A family. Methionine aminopeptidase type 1 subfamily. In terms of assembly, monomer. Co(2+) is required as a cofactor. Zn(2+) serves as cofactor. The cofactor is Mn(2+). It depends on Fe(2+) as a cofactor.

The enzyme catalyses Release of N-terminal amino acids, preferentially methionine, from peptides and arylamides.. Removes the N-terminal methionine from nascent proteins. The N-terminal methionine is often cleaved when the second residue in the primary sequence is small and uncharged (Met-Ala-, Cys, Gly, Pro, Ser, Thr, or Val). Requires deformylation of the N(alpha)-formylated initiator methionine before it can be hydrolyzed. This Clostridium acetobutylicum (strain ATCC 824 / DSM 792 / JCM 1419 / IAM 19013 / LMG 5710 / NBRC 13948 / NRRL B-527 / VKM B-1787 / 2291 / W) protein is Methionine aminopeptidase.